We begin with the raw amino-acid sequence, 192 residues long: Peptidyl-tRNA hydrolase (192 aa).

Histidine 19 (proton acceptor) is an active-site residue. TRNA is bound by residues tyrosine 64, asparagine 66, and asparagine 112.

It belongs to the PTH family. As to quaternary structure, monomer.

The protein localises to the cytoplasm. The enzyme catalyses an N-acyl-L-alpha-aminoacyl-tRNA + H2O = an N-acyl-L-amino acid + a tRNA + H(+). Functionally, hydrolyzes ribosome-free peptidyl-tRNAs (with 1 or more amino acids incorporated), which drop off the ribosome during protein synthesis, or as a result of ribosome stalling. In terms of biological role, catalyzes the release of premature peptidyl moieties from peptidyl-tRNA molecules trapped in stalled 50S ribosomal subunits, and thus maintains levels of free tRNAs and 50S ribosomes. This is Peptidyl-tRNA hydrolase from Acidiphilium cryptum (strain JF-5).